Consider the following 21-residue polypeptide: Apolipophorin 2 (21 aa).

In terms of tissue distribution, expressed in hemolymph.

Its subcellular location is the secreted. Its function is as follows. Constitutes the major component of lipophorin, which mediates transport for various types of lipids in hemolymph. Acts by forming lipoprotein particles that bind lipoproteins and lipids. This is Apolipophorin 2 from Galleria mellonella (Greater wax moth).